The primary structure comprises 497 residues: Malonate-semialdehyde dehydrogenase (497 aa).

The NAD(+) site is built by F148, K172, E175, R176, and S225. The Nucleophile role is filled by C280. E382 contacts NAD(+).

Belongs to the aldehyde dehydrogenase family.

It carries out the reaction 3-oxopropanoate + NAD(+) + CoA + H2O = hydrogencarbonate + acetyl-CoA + NADH + H(+). Functionally, involved in the degradation of beta-alanine. Likely catalyzes the NAD(+)- and CoA-dependent oxidative decarboxylation of malonate semialdehyde (3-oxopropanoate) to acetyl-CoA. The sequence is that of Malonate-semialdehyde dehydrogenase from Pseudomonas aeruginosa (strain ATCC 15692 / DSM 22644 / CIP 104116 / JCM 14847 / LMG 12228 / 1C / PRS 101 / PAO1).